The chain runs to 172 residues: Interferon tau-3 (172 aa).

Cystine bridges form between Cys-1–Cys-99 and Cys-29–Cys-139. N-linked (GlcNAc...) asparagine glycosylation occurs at Asn-78.

This sequence belongs to the alpha/beta interferon family. IFN-alphaII subfamily. As to expression, constitutively and exclusively expressed in the mononuclear cells of the extraembryonic trophectoderm.

Its subcellular location is the secreted. Its function is as follows. Paracrine hormone primarily responsible for maternal recognition of pregnancy. Interacts with endometrial receptors, probably type I interferon receptors, and blocks estrogen receptor expression, preventing the estrogen-induced increase in oxytocin receptor expression in the endometrium. This results in the suppression of the pulsatile endometrial release of the luteolytic hormone prostaglandin F2-alpha, hindering the regression of the corpus luteum (luteolysis) and therefore a return to ovarian cyclicity. This, and a possible direct effect of IFN-tau on prostaglandin synthesis, leads in turn to continued ovarian progesterone secretion, which stimulates the secretion by the endometrium of the nutrients required for the growth of the conceptus. In summary, displays particularly high antiviral and antiproliferative potency concurrently with particular weak cytotoxicity, high antiluteolytic activity and immunomodulatory properties. In contrast with other IFNs, IFN-tau is not virally inducible. The sequence is that of Interferon tau-3 (IFNT3) from Bos taurus (Bovine).